Here is a 366-residue protein sequence, read N- to C-terminus: UDP-GlcNAc:ribostamycin N-acetylglucosaminyltransferase (366 aa).

The span at 342-352 shows a compositional bias: low complexity; that stretch reads AAGAGPAVPAG. The interval 342–366 is disordered; it reads AAGAGPAVPAGAGEGRGGREEEHGG. Over residues 357–366 the composition is skewed to basic and acidic residues; sequence RGGREEEHGG.

The protein belongs to the glycosyltransferase group 1 family. Glycosyltransferase 4 subfamily. The cofactor is a divalent metal cation.

It carries out the reaction ribostamycin + UDP-N-acetyl-alpha-D-glucosamine = 2'''-acetyl-6'''-hydroxyneomycin C + UDP + H(+). Its pathway is antibiotic biosynthesis; neomycin biosynthesis. Its function is as follows. Glycosyltransferase involved in the biosynthesis of neomycin by mediating glycosylation of ribostamycin with UDP-GlcNAc as a sugar donor to generate 2'''-acetyl-6'''-hydroxyneomycin C. The polypeptide is UDP-GlcNAc:ribostamycin N-acetylglucosaminyltransferase (neoK) (Streptomyces fradiae (Streptomyces roseoflavus)).